The sequence spans 421 residues: Gamma-glutamyl phosphate reductase (421 aa).

The protein belongs to the gamma-glutamyl phosphate reductase family.

It is found in the cytoplasm. The catalysed reaction is L-glutamate 5-semialdehyde + phosphate + NADP(+) = L-glutamyl 5-phosphate + NADPH + H(+). The protein operates within amino-acid biosynthesis; L-proline biosynthesis; L-glutamate 5-semialdehyde from L-glutamate: step 2/2. Its function is as follows. Catalyzes the NADPH-dependent reduction of L-glutamate 5-phosphate into L-glutamate 5-semialdehyde and phosphate. The product spontaneously undergoes cyclization to form 1-pyrroline-5-carboxylate. The polypeptide is Gamma-glutamyl phosphate reductase (Acinetobacter baumannii (strain AYE)).